The sequence spans 273 residues: 4-hydroxy-tetrahydrodipicolinate reductase (273 aa).

Residues 12–17 (GAGGRM) and Glu38 contribute to the NAD(+) site. Residue Arg39 coordinates NADP(+). Residues 102–104 (GTT) and 126–129 (AANF) contribute to the NAD(+) site. His159 serves as the catalytic Proton donor/acceptor. His160 is a binding site for (S)-2,3,4,5-tetrahydrodipicolinate. Lys163 functions as the Proton donor in the catalytic mechanism. A (S)-2,3,4,5-tetrahydrodipicolinate-binding site is contributed by 169-170 (GT).

The protein belongs to the DapB family. In terms of assembly, homotetramer.

The protein resides in the cytoplasm. The catalysed reaction is (S)-2,3,4,5-tetrahydrodipicolinate + NAD(+) + H2O = (2S,4S)-4-hydroxy-2,3,4,5-tetrahydrodipicolinate + NADH + H(+). The enzyme catalyses (S)-2,3,4,5-tetrahydrodipicolinate + NADP(+) + H2O = (2S,4S)-4-hydroxy-2,3,4,5-tetrahydrodipicolinate + NADPH + H(+). The protein operates within amino-acid biosynthesis; L-lysine biosynthesis via DAP pathway; (S)-tetrahydrodipicolinate from L-aspartate: step 4/4. Its function is as follows. Catalyzes the conversion of 4-hydroxy-tetrahydrodipicolinate (HTPA) to tetrahydrodipicolinate. The chain is 4-hydroxy-tetrahydrodipicolinate reductase from Yersinia pseudotuberculosis serotype O:1b (strain IP 31758).